Reading from the N-terminus, the 365-residue chain is tRNA-specific 2-thiouridylase MnmA (365 aa).

ATP-binding positions include 14 to 21 (AMSGGVDS) and Leu-40. Cys-108 (nucleophile) is an active-site residue. A disulfide bridge links Cys-108 with Cys-204. Residue Gly-132 coordinates ATP. The tract at residues 154–156 (KDQ) is interaction with tRNA. Catalysis depends on Cys-204, which acts as the Cysteine persulfide intermediate.

The protein belongs to the MnmA/TRMU family.

The protein localises to the cytoplasm. It catalyses the reaction S-sulfanyl-L-cysteinyl-[protein] + uridine(34) in tRNA + AH2 + ATP = 2-thiouridine(34) in tRNA + L-cysteinyl-[protein] + A + AMP + diphosphate + H(+). Its function is as follows. Catalyzes the 2-thiolation of uridine at the wobble position (U34) of tRNA, leading to the formation of s(2)U34. The protein is tRNA-specific 2-thiouridylase MnmA of Rickettsia africae (strain ESF-5).